Reading from the N-terminus, the 381-residue chain is Alkanesulfonate monooxygenase (381 aa).

The protein belongs to the SsuD family. In terms of assembly, homotetramer.

The enzyme catalyses an alkanesulfonate + FMNH2 + O2 = an aldehyde + FMN + sulfite + H2O + 2 H(+). Its function is as follows. Catalyzes the desulfonation of aliphatic sulfonates. This Escherichia coli O17:K52:H18 (strain UMN026 / ExPEC) protein is Alkanesulfonate monooxygenase.